We begin with the raw amino-acid sequence, 344 residues long: Arginine N-succinyltransferase (344 aa).

Residue leucine 125 participates in succinyl-CoA binding. The active-site Proton donor is histidine 229.

It belongs to the arginine N-succinyltransferase family.

The catalysed reaction is succinyl-CoA + L-arginine = N(2)-succinyl-L-arginine + CoA + H(+). The protein operates within amino-acid degradation; L-arginine degradation via AST pathway; L-glutamate and succinate from L-arginine: step 1/5. Functionally, catalyzes the transfer of succinyl-CoA to arginine to produce N(2)-succinylarginine. This is Arginine N-succinyltransferase from Escherichia fergusonii (strain ATCC 35469 / DSM 13698 / CCUG 18766 / IAM 14443 / JCM 21226 / LMG 7866 / NBRC 102419 / NCTC 12128 / CDC 0568-73).